Here is a 500-residue protein sequence, read N- to C-terminus: UDP-N-acetylmuramoyl-L-alanyl-D-glutamate--2,6-diaminopimelate ligase (500 aa).

UDP-N-acetyl-alpha-D-muramoyl-L-alanyl-D-glutamate is bound by residues leucine 26, serine 28, and 43-45 (HQV). 123–129 (GTNGKTT) lines the ATP pocket. Residues asparagine 164, 165–166 (TT), serine 192, glutamine 198, and arginine 200 each bind UDP-N-acetyl-alpha-D-muramoyl-L-alanyl-D-glutamate. Position 232 is an N6-carboxylysine (lysine 232). Meso-2,6-diaminopimelate contacts are provided by residues arginine 399, 423-426 (DNPR), glycine 474, and glutamate 478. The Meso-diaminopimelate recognition motif motif lies at 423–426 (DNPR).

This sequence belongs to the MurCDEF family. MurE subfamily. Requires Mg(2+) as cofactor. Carboxylation is probably crucial for Mg(2+) binding and, consequently, for the gamma-phosphate positioning of ATP.

Its subcellular location is the cytoplasm. The catalysed reaction is UDP-N-acetyl-alpha-D-muramoyl-L-alanyl-D-glutamate + meso-2,6-diaminopimelate + ATP = UDP-N-acetyl-alpha-D-muramoyl-L-alanyl-gamma-D-glutamyl-meso-2,6-diaminopimelate + ADP + phosphate + H(+). It participates in cell wall biogenesis; peptidoglycan biosynthesis. Functionally, catalyzes the addition of meso-diaminopimelic acid to the nucleotide precursor UDP-N-acetylmuramoyl-L-alanyl-D-glutamate (UMAG) in the biosynthesis of bacterial cell-wall peptidoglycan. The polypeptide is UDP-N-acetylmuramoyl-L-alanyl-D-glutamate--2,6-diaminopimelate ligase (Actinobacillus pleuropneumoniae serotype 5b (strain L20)).